The chain runs to 340 residues: Entry-fusion complex protein OPG094 (340 aa).

Positions 1–20 (MGGGVSVELPKRDPPPGVPT) are disordered. Gly2 carries N-myristoyl glycine; by host lipidation. Residues 2 to 319 (GGGVSVELPK…VQHNIKHSFD (318 aa)) are Virion surface-facing. Residues 320-340 (LKLHLISLLSLLVIWILIVAI) traverse the membrane as a helical; Signal-anchor for type II membrane protein segment.

It belongs to the orthopoxvirus OPG086 family. In terms of assembly, interacts with OPG143. Component of the entry fusion complex (EFC) composed of OPG053, OPG076, OPG086, OPG094, OPG095, OPG099, OPG107, OPG143, OPG104, OPG147 and OPG155. Except for OPG095 and OPG053, each of the EFC proteins is required for assembly or stability of the complex. Unglycosylated because produced in viral factories instead of the classic ER -Golgi route.

It localises to the virion membrane. Its function is as follows. Component of the entry fusion complex (EFC), which consists of 11 proteins. During cell infection, this complex mediates entry of the virion core into the host cytoplasm by a two-step mechanism consisting of lipid mixing of the viral and cellular membranes and subsequent pore formation. The polypeptide is Entry-fusion complex protein OPG094 (OPG094) (Variola virus).